Here is a 104-residue protein sequence, read N- to C-terminus: Protein MGF 110-2L (104 aa).

An N-terminal signal peptide occupies residues Met1–Gly19.

This sequence belongs to the asfivirus MGF 110 family.

In terms of biological role, plays a role in virus cell tropism, and may be required for efficient virus replication in macrophages. This chain is Protein MGF 110-2L, found in African swine fever virus (isolate Tick/South Africa/Pretoriuskop Pr4/1996) (ASFV).